An 886-amino-acid polypeptide reads, in one-letter code: Protein translocase subunit SecA (886 aa).

ATP contacts are provided by residues Gln-85, 103–107 (GEGKT), and Asp-492. Residues 841–864 (RVVENRYAEEGPKQPARRENKVGR) are compositionally biased toward basic and acidic residues. Residues 841-866 (RVVENRYAEEGPKQPARRENKVGRND) form a disordered region. Residues Cys-868, Cys-870, Cys-879, and Cys-880 each coordinate Zn(2+).

This sequence belongs to the SecA family. In terms of assembly, monomer and homodimer. Part of the essential Sec protein translocation apparatus which comprises SecA, SecYEG and auxiliary proteins SecDF. Other proteins may also be involved. Zn(2+) serves as cofactor.

It localises to the cell membrane. The protein resides in the cytoplasm. It carries out the reaction ATP + H2O + cellular proteinSide 1 = ADP + phosphate + cellular proteinSide 2.. Its function is as follows. Part of the Sec protein translocase complex. Interacts with the SecYEG preprotein conducting channel. Has a central role in coupling the hydrolysis of ATP to the transfer of proteins into and across the cell membrane, serving as an ATP-driven molecular motor driving the stepwise translocation of polypeptide chains across the membrane. The polypeptide is Protein translocase subunit SecA (Pelotomaculum thermopropionicum (strain DSM 13744 / JCM 10971 / SI)).